We begin with the raw amino-acid sequence, 125 residues long: Fluoride-specific ion channel FluC (125 aa).

3 helical membrane-spanning segments follow: residues 36 to 56 (GTIF…FLSI), 65 to 85 (FILF…TFAY), and 99 to 119 (IIYF…GMFL). Na(+) contacts are provided by Gly75 and Thr78.

The protein belongs to the fluoride channel Fluc/FEX (TC 1.A.43) family.

Its subcellular location is the cell inner membrane. It carries out the reaction fluoride(in) = fluoride(out). With respect to regulation, na(+) is not transported, but it plays an essential structural role and its presence is essential for fluoride channel function. Functionally, fluoride-specific ion channel. Important for reducing fluoride concentration in the cell, thus reducing its toxicity. The protein is Fluoride-specific ion channel FluC of Thermosipho africanus (strain TCF52B).